Here is a 448-residue protein sequence, read N- to C-terminus: UDP-N-acetylmuramoylalanine--D-glutamate ligase (448 aa).

116 to 122 (GSNAKST) contributes to the ATP binding site.

It belongs to the MurCDEF family.

It is found in the cytoplasm. The enzyme catalyses UDP-N-acetyl-alpha-D-muramoyl-L-alanine + D-glutamate + ATP = UDP-N-acetyl-alpha-D-muramoyl-L-alanyl-D-glutamate + ADP + phosphate + H(+). Its pathway is cell wall biogenesis; peptidoglycan biosynthesis. Its function is as follows. Cell wall formation. Catalyzes the addition of glutamate to the nucleotide precursor UDP-N-acetylmuramoyl-L-alanine (UMA). In Pseudomonas fluorescens (strain ATCC BAA-477 / NRRL B-23932 / Pf-5), this protein is UDP-N-acetylmuramoylalanine--D-glutamate ligase.